Reading from the N-terminus, the 325-residue chain is MSSITKRDKVIIGSRKSQLAMLQTEWVRDRIQELNPGIIVEIKTMDTTGDKVLDVSLSKIGDKGLFTKELEDMMLNGTIDLAVHSLKDIPTKLPDGLKLGAITKRYNTSDAFIANAKKHGKNCKLSELPQGAMIGSSSLRRVAQLKKAYPHLQFKDIRGNLNTRFKKLEDDSNGYDGMILAVAGLERMELTDHISEIIPDSISLYAVGQGSLGIECKDGDDFIQSILNPLIHRESMYCCEAERSMLRDLEGGCHVPIGVVTKLHNQSQPDETLEINAIVLNLDGSKYIESKIIGPSIQYYQLGKSIAQDLINKGSKDILSEFIKK.

Cysteine 253 carries the S-(dipyrrolylmethanemethyl)cysteine modification.

Belongs to the HMBS family. Requires dipyrromethane as cofactor.

It catalyses the reaction 4 porphobilinogen + H2O = hydroxymethylbilane + 4 NH4(+). The protein operates within porphyrin-containing compound metabolism; protoporphyrin-IX biosynthesis; coproporphyrinogen-III from 5-aminolevulinate: step 2/4. In terms of biological role, tetrapolymerization of the monopyrrole PBG into the hydroxymethylbilane pre-uroporphyrinogen in several discrete steps. This chain is Porphobilinogen deaminase (hemC), found in Dictyostelium discoideum (Social amoeba).